Here is a 253-residue protein sequence, read N- to C-terminus: MRTVVVKVGGASVAGGALEDLPGVVSGGARVAVVHGGGRQLTRMLDSLGVPTSFREGLRVTDERTLEVAEMVFAGSVNKQLARGLLALGVPAAGVSGTDGPVLRVEPVPGLGRVGRVVAVETRLLETLWGGGFVPVVAPLGLGPRGAYNVNADDAAAALAVALGAGELLLLTDVDGLLRDDEPVPALTPAECERYVSSGVASGGMAPKLRAAAEAARGGVPARIINGGRRGALAGALAGGQVGTLVRQEGAFA.

Substrate is bound by residues 37–38 (GG), arginine 59, and asparagine 149.

Belongs to the acetylglutamate kinase family. ArgB subfamily.

It is found in the cytoplasm. It catalyses the reaction N-acetyl-L-glutamate + ATP = N-acetyl-L-glutamyl 5-phosphate + ADP. It functions in the pathway amino-acid biosynthesis; L-arginine biosynthesis; N(2)-acetyl-L-ornithine from L-glutamate: step 2/4. In terms of biological role, catalyzes the ATP-dependent phosphorylation of N-acetyl-L-glutamate. The chain is Acetylglutamate kinase from Rubrobacter xylanophilus (strain DSM 9941 / JCM 11954 / NBRC 16129 / PRD-1).